A 292-amino-acid polypeptide reads, in one-letter code: NIF3-like protein 1 (292 aa).

Belongs to the GTP cyclohydrolase I type 2/NIF3 family.

This Drosophila melanogaster (Fruit fly) protein is NIF3-like protein 1 (anon-35F/36A).